A 238-amino-acid chain; its full sequence is D/L-lactic acid transporter (238 aa).

Transmembrane regions (helical) follow at residues Val2 to Val22 and Ile39 to Val59. Residues Asn62–Ala64 carry the NPA 1 motif. The next 3 membrane-spanning stretches (helical) occupy residues Phe80 to Ile100, Phe135 to Ile155, and Pro158 to Gly178. Residues Asn185–Ala187 carry the NPA 2 motif. Residues Tyr211 to Met231 traverse the membrane as a helical segment.

Belongs to the MIP/aquaporin (TC 1.A.8) family.

The protein localises to the cell membrane. Functionally, transporter that facilitates the transmembrane diffusion of D/L-lactic acid. Is involved in the cellular racemization of lactate and lactate metabolism. The transported molecule is indeed lactic acid and not the lactate anion, in agreement with the assumption that, with very few exceptions, MIPs (major intrinsic proteins) only facilitate the transport of uncharged solutes. Also facilitates urea and H(2)O(2) diffusion across membranes, but is not permeable to water, glycerol and dihydroxyacetone. In Lactiplantibacillus plantarum (strain ATCC BAA-793 / NCIMB 8826 / WCFS1) (Lactobacillus plantarum), this protein is D/L-lactic acid transporter.